Consider the following 288-residue polypeptide: Coiled-coil domain-containing protein 190 (288 aa).

Positions 16–69 form a coiled coil; the sequence is LERKSARQAEARLSLRLQRLEIICLYHVKSLAREQRQLQKELQRLQQDIIKKRF. The interval 141–235 is disordered; that stretch reads GERTSCFKEG…SSVDYAGSFK (95 aa). Over residues 177 to 188 the composition is skewed to basic and acidic residues; the sequence is HDQELSTNKTED. Residues 203–213 are compositionally biased toward polar residues; it reads ANETRSENASQ.

The sequence is that of Coiled-coil domain-containing protein 190 (Ccdc190) from Mus musculus (Mouse).